Consider the following 148-residue polypeptide: Putative nickel-responsive regulator (148 aa).

Residues H88, H99, H101, and C107 each contribute to the Ni(2+) site.

This sequence belongs to the transcriptional regulatory CopG/NikR family. Requires Ni(2+) as cofactor.

Its function is as follows. Transcriptional regulator. The protein is Putative nickel-responsive regulator of Helicobacter pylori (strain Shi470).